A 264-amino-acid chain; its full sequence is Major prion protein (264 aa).

An N-terminal signal peptide occupies residues 1 to 24; that stretch reads MVKSHIGSWILVLFVAMWSDVGLC. An interaction with GRB2, ERI3 and SYN1 region spans residues 25-241; the sequence is KKRPKPGGGW…ESQAYYQRGA (217 aa). A disordered region spans residues 28–118; sequence PKPGGGWNTG…QWNKPSKPKT (91 aa). A run of 6 repeats spans residues 54–62, 63–70, 71–78, 79–86, 87–94, and 95–103. The 6 X 8 AA tandem repeats of P-H-G-G-G-W-G-Q stretch occupies residues 54–103; it reads PQGGGSWGQPHGGGWGQPHGGSWGQPHGGGWGQPHGGGWGQPHGGGGWGQ. A compositionally biased stretch (gly residues) spans 55–107; sequence QGGGSWGQPHGGGWGQPHGGSWGQPHGGGWGQPHGGGWGQPHGGGGWGQGGTH. Residues H72, G73, G74, H80, G81, G82, H88, G89, G90, H96, G98, and G99 each coordinate Cu(2+). Residues C190 and C225 are joined by a disulfide bond. N-linked (GlcNAc...) asparagine glycosylation is found at N192 and N208. A lipid anchor (GPI-anchor amidated alanine) is attached at A241. Positions 242-264 are cleaved as a propeptide — removed in mature form; sequence SVVLFSSPPVVLLISFLIFLIVG.

Belongs to the prion family. Monomer and homodimer. Has a tendency to aggregate into amyloid fibrils containing a cross-beta spine, formed by a steric zipper of superposed beta-strands. Soluble oligomers may represent an intermediate stage on the path to fibril formation. Copper binding may promote oligomerization. Interacts with GRB2, APP, ERI3/PRNPIP and SYN1. Mislocalized cytosolically exposed PrP interacts with MGRN1; this interaction alters MGRN1 subcellular location and causes lysosomal enlargement. Interacts with KIAA1191.

It is found in the cell membrane. Its subcellular location is the golgi apparatus. In terms of biological role, its primary physiological function is unclear. Has cytoprotective activity against internal or environmental stresses. May play a role in neuronal development and synaptic plasticity. May be required for neuronal myelin sheath maintenance. May play a role in iron uptake and iron homeostasis. Soluble oligomers are toxic to cultured neuroblastoma cells and induce apoptosis (in vitro). Association with GPC1 (via its heparan sulfate chains) targets PRNP to lipid rafts. Also provides Cu(2+) or Zn(2+) for the ascorbate-mediated GPC1 deaminase degradation of its heparan sulfate side chains. The chain is Major prion protein (PRNP) from Boselaphus tragocamelus (Nilgai).